We begin with the raw amino-acid sequence, 484 residues long: Acetyl-coenzyme A carboxylase carboxyl transferase subunit beta, chloroplastic (484 aa).

Positions 223–484 (LWIQCDNCYG…LHAFFPLNKN (262 aa)) constitute a CoA carboxyltransferase N-terminal domain. C227, C230, C243, and C246 together coordinate Zn(2+). A C4-type zinc finger spans residues 227 to 246 (CDNCYGLMYKKVKMNVCEQC).

The protein belongs to the AccD/PCCB family. In terms of assembly, acetyl-CoA carboxylase is a heterohexamer composed of biotin carboxyl carrier protein, biotin carboxylase and 2 subunits each of ACCase subunit alpha and ACCase plastid-coded subunit beta (accD). The cofactor is Zn(2+).

Its subcellular location is the plastid. The protein resides in the chloroplast stroma. It carries out the reaction N(6)-carboxybiotinyl-L-lysyl-[protein] + acetyl-CoA = N(6)-biotinyl-L-lysyl-[protein] + malonyl-CoA. Its pathway is lipid metabolism; malonyl-CoA biosynthesis; malonyl-CoA from acetyl-CoA: step 1/1. Functionally, component of the acetyl coenzyme A carboxylase (ACC) complex. Biotin carboxylase (BC) catalyzes the carboxylation of biotin on its carrier protein (BCCP) and then the CO(2) group is transferred by the transcarboxylase to acetyl-CoA to form malonyl-CoA. This Olimarabidopsis pumila (Dwarf rocket) protein is Acetyl-coenzyme A carboxylase carboxyl transferase subunit beta, chloroplastic.